The primary structure comprises 175 residues: Ribosome maturation factor RimM (175 aa).

Residues 99–172 (ADEYHVSDLI…RLEVDAPPGL (74 aa)) enclose the PRC barrel domain.

Belongs to the RimM family. Binds ribosomal protein uS19.

The protein localises to the cytoplasm. In terms of biological role, an accessory protein needed during the final step in the assembly of 30S ribosomal subunit, possibly for assembly of the head region. Essential for efficient processing of 16S rRNA. May be needed both before and after RbfA during the maturation of 16S rRNA. It has affinity for free ribosomal 30S subunits but not for 70S ribosomes. This Picosynechococcus sp. (strain ATCC 27264 / PCC 7002 / PR-6) (Agmenellum quadruplicatum) protein is Ribosome maturation factor RimM.